The primary structure comprises 360 residues: MILRRLFHVLPAFAFTLFILVLLDLQLRTRSDQKPQNAHDGHQRTTFISETTAENQHRDGAHEKEKAEGQKWTEVRSTPPLELSDIFIAVKTTGRFHKSRLALLLETWISETKEHTYIFTDSPDADISSEGFNVVVTNCSPEHSHQALSCKMAAEYDYFMASYKKWLCHVDDDNYLNPGALLSLLMAFPADGDIYVGKPSLDRPMRAQELLEGNKTRDVHFWFATGGAGFCLSRNLAERMAPWASGPRFEQTSAVIMLPDDCTVGFIVERRLGISMIHSNMFHSHLENLLLLSPSDIPKQVTLSYGWFESKMNSVELKGVFTKDEDPSRFRTVHCLLYPTTSWCPVALKSALSWNQHVMH.

Topologically, residues 1 to 5 (MILRR) are cytoplasmic. A helical; Signal-anchor for type II membrane protein transmembrane segment spans residues 6 to 26 (LFHVLPAFAFTLFILVLLDLQ). Residues 27–360 (LRTRSDQKPQ…ALSWNQHVMH (334 aa)) lie on the Lumenal side of the membrane. A disordered region spans residues 51-74 (TTAENQHRDGAHEKEKAEGQKWTE). A compositionally biased stretch (basic and acidic residues) spans 55-74 (NQHRDGAHEKEKAEGQKWTE). Residue R100 participates in substrate binding. Intrachain disulfides connect C139–C150 and C168–C231. Substrate is bound at residue D172. D173 serves as a coordination point for Mn(2+). A glycan (N-linked (GlcNAc...) asparagine) is linked at N214. Residue D261 is part of the active site. Residue H285 coordinates Mn(2+). The cysteines at positions 335 and 344 are disulfide-linked.

It belongs to the glycosyltransferase 31 family. It depends on Mn(2+) as a cofactor.

Its subcellular location is the golgi apparatus membrane. It carries out the reaction 3-O-(alpha-L-fucosyl)-L-threonyl-[EGF-like domain protein] + UDP-N-acetyl-alpha-D-glucosamine = 3-O-(N-acetyl-beta-D-glucosaminyl-(1-&gt;3)-alpha-L-fucosyl)-L-threonyl-[EGF-like domain protein] + UDP + H(+). It catalyses the reaction 3-O-(alpha-L-fucosyl)-L-seryl-[EGF-like domain protein] + UDP-N-acetyl-alpha-D-glucosamine = 3-O-(N-acetyl-beta-D-glucosaminyl-(1-&gt;3)-alpha-L-fucosyl)-L-seryl-[EGF-like domain protein] + UDP + H(+). Its function is as follows. Glycosyltransferase that initiates the elongation of O-linked fucose residues attached to EGF-like repeats in the extracellular domain of Notch molecules. The chain is Beta-1,3-N-acetylglucosaminyltransferase manic fringe from Danio rerio (Zebrafish).